Consider the following 331-residue polypeptide: Phenylalanine--tRNA ligase alpha subunit (331 aa).

Residue Glu-252 participates in Mg(2+) binding.

It belongs to the class-II aminoacyl-tRNA synthetase family. Phe-tRNA synthetase alpha subunit type 1 subfamily. Tetramer of two alpha and two beta subunits. Mg(2+) serves as cofactor.

The protein resides in the cytoplasm. The enzyme catalyses tRNA(Phe) + L-phenylalanine + ATP = L-phenylalanyl-tRNA(Phe) + AMP + diphosphate + H(+). The protein is Phenylalanine--tRNA ligase alpha subunit of Xanthomonas axonopodis pv. citri (strain 306).